Reading from the N-terminus, the 143-residue chain is Large ribosomal subunit protein bL17 (143 aa).

Belongs to the bacterial ribosomal protein bL17 family. As to quaternary structure, part of the 50S ribosomal subunit. Contacts protein L32.

The polypeptide is Large ribosomal subunit protein bL17 (Bartonella quintana (strain Toulouse) (Rochalimaea quintana)).